The following is a 310-amino-acid chain: Glycine-rich RNA-binding protein RZ1C (310 aa).

Residues S7–P85 form the RRM domain. S15 is modified (phosphoserine). Residues R82–G120 are disordered. A compositionally biased stretch (basic and acidic residues) spans A83 to R101. The segment covering G111–G120 has biased composition (gly residues). A CCHC-type zinc finger spans residues C128–S143. Residues R224 to Y310 are disordered. Basic and acidic residues-rich tracts occupy residues A226 to D236 and D244 to I253. The span at R261 to G273 shows a compositional bias: gly residues. S295 carries the post-translational modification Phosphoserine.

Expressed in roots, rosette and cauline leaves, stems, floral buds and flowers.

It localises to the nucleus. Its function is as follows. Binds RNA and DNA sequences non-specifically. May be involved in tolerance to cold stress. The chain is Glycine-rich RNA-binding protein RZ1C from Arabidopsis thaliana (Mouse-ear cress).